Here is a 411-residue protein sequence, read N- to C-terminus: MKNKNILEFLKKRGYIYQGSNFDLIEKELIKGTSFYIGFDPTADSLHVGHFLTMMAVKHLQKAGNNPVIVVGGGTGSVGDPSGRSEIRKILDRKTIDYNCECLKKQMSKFISFEGKNKAVMVNNADWLLKINWIEFLREFGVCFSVNKMLAAEAFKVRFEQESGLSFLEFNYMLMQAYDFYYLNQNYNVNIQLGGSDQWSNILAGVDLIRRKSSKEAFALTLNLLTKHDGTKMGKTATGAIWLDKNKTSPYEFYQYWLNIDDQDVERFLLLLTELDDKTISDLCKEKGKKIVEAKKVLASELTKMIHGQEELDKAIEQSKAAFENASDNLPTYELKASDLNNDYSIANILVVTKLSPSKAESRRLITSNAVSVNETKITDVNTKLEDLKIDQTNFTLHKGKKNHIKVIINK.

Tyr36 serves as a coordination point for L-tyrosine. The 'HIGH' region motif lies at 41–50; it reads PTADSLHVGH. Residues Tyr172 and Gln176 each coordinate L-tyrosine. The 'KMSKS' region signature appears at 232–236; it reads KMGKT. An ATP-binding site is contributed by Lys235. In terms of domain architecture, S4 RNA-binding spans 344–409; sequence YSIANILVVT…GKKNHIKVII (66 aa).

Belongs to the class-I aminoacyl-tRNA synthetase family. TyrS type 1 subfamily. As to quaternary structure, homodimer.

The protein localises to the cytoplasm. It catalyses the reaction tRNA(Tyr) + L-tyrosine + ATP = L-tyrosyl-tRNA(Tyr) + AMP + diphosphate + H(+). In terms of biological role, catalyzes the attachment of tyrosine to tRNA(Tyr) in a two-step reaction: tyrosine is first activated by ATP to form Tyr-AMP and then transferred to the acceptor end of tRNA(Tyr). The polypeptide is Tyrosine--tRNA ligase (Malacoplasma penetrans (strain HF-2) (Mycoplasma penetrans)).